A 406-amino-acid polypeptide reads, in one-letter code: Immediate early response gene 5-like protein (406 aa).

2 disordered regions span residues 166–195 (QPPHGAPHRGQHLEPLQPGPAPLPPPAPAA) and 216–235 (AAPSTVAASSPPASTAPSSS). A compositionally biased stretch (pro residues) spans 182–193 (QPGPAPLPPPAP).

The protein belongs to the IER family.

The polypeptide is Immediate early response gene 5-like protein (Ier5l) (Mus musculus (Mouse)).